The chain runs to 171 residues: Adenine phosphoribosyltransferase (171 aa).

The protein belongs to the purine/pyrimidine phosphoribosyltransferase family. Homodimer.

The protein resides in the cytoplasm. It catalyses the reaction AMP + diphosphate = 5-phospho-alpha-D-ribose 1-diphosphate + adenine. It participates in purine metabolism; AMP biosynthesis via salvage pathway; AMP from adenine: step 1/1. Functionally, catalyzes a salvage reaction resulting in the formation of AMP, that is energically less costly than de novo synthesis. The sequence is that of Adenine phosphoribosyltransferase (apt) from Prochlorococcus marinus subsp. pastoris (strain CCMP1986 / NIES-2087 / MED4).